The chain runs to 366 residues: Protein-methionine-sulfoxide reductase catalytic subunit MsrP (366 aa).

Residues methionine 1–asparagine 22 are compositionally biased toward low complexity. Residues methionine 1–leucine 40 form a disordered region. A signal peptide (tat-type signal) is located at residues methionine 1–alanine 76. The span at serine 23 to serine 33 shows a compositional bias: polar residues. Residues asparagine 120, tyrosine 123–glutamate 124, cysteine 178, threonine 213, asparagine 265, arginine 270, and serine 281–lysine 283 contribute to the Mo-molybdopterin site.

Belongs to the MsrP family. Heterodimer of a catalytic subunit (MsrP) and a heme-binding subunit (MsrQ). Requires Mo-molybdopterin as cofactor. Post-translationally, predicted to be exported by the Tat system. The position of the signal peptide cleavage has not been experimentally proven.

The protein localises to the periplasm. The enzyme catalyses L-methionyl-[protein] + a quinone + H2O = L-methionyl-(S)-S-oxide-[protein] + a quinol. It carries out the reaction L-methionyl-[protein] + a quinone + H2O = L-methionyl-(R)-S-oxide-[protein] + a quinol. In terms of biological role, part of the MsrPQ system that repairs oxidized periplasmic proteins containing methionine sulfoxide residues (Met-O), using respiratory chain electrons. Thus protects these proteins from oxidative-stress damage caused by reactive species of oxygen and chlorine generated by the host defense mechanisms. MsrPQ is essential for the maintenance of envelope integrity under bleach stress, rescuing a wide series of structurally unrelated periplasmic proteins from methionine oxidation. The catalytic subunit MsrP is non-stereospecific, being able to reduce both (R-) and (S-) diastereoisomers of methionine sulfoxide. In Yersinia pestis, this protein is Protein-methionine-sulfoxide reductase catalytic subunit MsrP.